Consider the following 247-residue polypeptide: Auxin-responsive protein IAA13 (247 aa).

An EAR-like (transcriptional repression) motif is present at residues 14-18 (LELGL). Residues 25-40 (GTAAKIGKSGGGGAWG) show a composition bias toward gly residues. 2 disordered regions span residues 25-44 (GTAA…ERGR) and 49-119 (KDFP…PKDV). Residues 62–75 (SASHAGSSPPRSSS) show a composition bias toward low complexity. Residues 87-98 (RMNSLVNNQATK) show a composition bias toward polar residues. Residues 106–119 (AGKKKVKDDEPKDV) are compositionally biased toward basic and acidic residues. The PB1 domain occupies 129–225 (VGFIKVNMDG…SVKRLRVMKT (97 aa)).

Belongs to the Aux/IAA family. In terms of assembly, homodimers and heterodimers. Interacts with TPL. In terms of tissue distribution, preferentially expressed in stems.

It is found in the nucleus. Its function is as follows. Aux/IAA proteins are short-lived transcriptional factors that function as repressors of early auxin response genes at low auxin concentrations. Repression is thought to result from the interaction with auxin response factors (ARFs), proteins that bind to the auxin-responsive promoter element (AuxRE). Formation of heterodimers with ARF proteins may alter their ability to modulate early auxin response genes expression. The chain is Auxin-responsive protein IAA13 (IAA13) from Arabidopsis thaliana (Mouse-ear cress).